We begin with the raw amino-acid sequence, 672 residues long: uncharacterized protein (672 aa).

Positions 1–24 (MKTLKTLKIFIIICIASVSLASFA) are cleaved as a signal peptide. The next 6 membrane-spanning stretches (helical) occupy residues 226-246 (IIGAALILYTMFFAFNMALNK), 254-274 (IALFVIKFLLVAYFSIGLGPL), 410-430 (IILAAGLVFSVIFLSILLYFI), 436-456 (CMITIYVMTYISPIFIPMALF), 469-489 (VCISCALQPAVVAGFIALLIT), and 562-582 (VVSILAELLCVLVFSVIFYYF). Residues 626–672 (ASQGKPSVGDKPDVGGKRKEGEQQGGDSESGAGGGLADLASGSGGGK) are disordered. A compositionally biased stretch (basic and acidic residues) spans 633–647 (VGDKPDVGGKRKEGE). Residues 656 to 672 (GAGGGLADLASGSGGGK) are compositionally biased toward gly residues.

It belongs to the TrbL/VirB6 family.

Its subcellular location is the cell membrane. This is an uncharacterized protein from Rickettsia felis (strain ATCC VR-1525 / URRWXCal2) (Rickettsia azadi).